Here is a 93-residue protein sequence, read N- to C-terminus: Small integral membrane protein 36 (93 aa).

The helical transmembrane segment at 14–34 (LIILVASYVILLLVFLVSCVL) threads the bilayer. The segment at 70 to 93 (SHWARGPSLHLKDPAPLGKKSTVV) is disordered.

It is found in the membrane. This is Small integral membrane protein 36 from Mus musculus (Mouse).